The sequence spans 914 residues: Inter-alpha-trypsin inhibitor heavy chain H1 (914 aa).

The N-terminal stretch at 1-30 is a signal peptide; it reads MDGAAVGLRVLLGLGLVSLLTLEAMPAAWG. Positions 31–36 are excised as a propeptide; sequence LATTGR. In terms of domain architecture, VIT spans 39–168; the sequence is AREKRQAVDT…KATFQLTYEE (130 aa). S-linked (Hex...) cysteine glycosylation occurs at C62. S131 carries the post-translational modification Phosphoserine. N-linked (GlcNAc...) asparagine glycans are attached at residues N288 and N291. Residues 293–453 enclose the VWFA domain; the sequence is SKNLVFVIDI…FNFLEVMSME (161 aa). T405 and T410 each carry phosphothreonine. Residue N591 is glycosylated (N-linked (GlcNAc...) asparagine). O-linked (GalNAc...) threonine glycosylation is present at T656. At D675 the chain carries Aspartate 1-(chondroitin 4-sulfate)-ester. The propeptide occupies 676–914; that stretch reads PHFIIYVPQK…HTDYIVPDIF (239 aa).

This sequence belongs to the ITIH family. In terms of assembly, I-alpha-I plasma protease inhibitors are assembled from one or two heavy chains (HC) and one light chain, bikunin. Inter-alpha-inhibitor (I-alpha-I) is composed of ITIH1/HC1, ITIH2/HC2 and bikunin. Interacts with TNFAIP6 (via Link and CUB domains). In terms of processing, heavy chains are linked to bikunin via chondroitin 4-sulfate esterified to the alpha-carboxyl of the C-terminal aspartate after propeptide cleavage. The S-linked glycan is composed of two 6-carbon sugars, possibly Glc or Gal.

The protein localises to the secreted. Its function is as follows. May act as a carrier of hyaluronan in serum or as a binding protein between hyaluronan and other matrix protein, including those on cell surfaces in tissues to regulate the localization, synthesis and degradation of hyaluronan which are essential to cells undergoing biological processes. The sequence is that of Inter-alpha-trypsin inhibitor heavy chain H1 (ITIH1) from Mesocricetus auratus (Golden hamster).